The sequence spans 297 residues: Cell death peptidase (297 aa).

Helical transmembrane passes span 61–82 (IVLTVASLEYIWAFSNFFWVFT) and 149–178 (IFLCAIAWILHHEISHVVLQHPLVTTAFST).

Belongs to the peptidase U49 family.

The protein resides in the cell membrane. Its function is as follows. Interacts with a short DNA sequence about one-quarter of the way into the major capsid protein gene 23 of T4; general translation inhibition occurs when this late gene of the virus is expressed. This Escherichia coli (strain K12) protein is Cell death peptidase (lit).